A 77-amino-acid chain; its full sequence is Putative defensin-like protein 60 (77 aa).

Residues 1 to 25 (MKMNITKSYVILFLVVVMTNSLSNS) form the signal peptide. Intrachain disulfides connect Cys41–Cys75, Cys45–Cys68, Cys54–Cys73, and Cys58–Cys74.

Belongs to the DEFL family.

The protein resides in the secreted. The chain is Putative defensin-like protein 60 from Arabidopsis thaliana (Mouse-ear cress).